The chain runs to 208 residues: Uracil phosphoribosyltransferase (208 aa).

Residues arginine 78, arginine 103, and 130–138 (DPMFATGGT) contribute to the 5-phospho-alpha-D-ribose 1-diphosphate site. Uracil contacts are provided by residues isoleucine 193 and 198–200 (GDA). Aspartate 199 contributes to the 5-phospho-alpha-D-ribose 1-diphosphate binding site.

Belongs to the UPRTase family. Requires Mg(2+) as cofactor.

It carries out the reaction UMP + diphosphate = 5-phospho-alpha-D-ribose 1-diphosphate + uracil. It participates in pyrimidine metabolism; UMP biosynthesis via salvage pathway; UMP from uracil: step 1/1. With respect to regulation, allosterically activated by GTP. In terms of biological role, catalyzes the conversion of uracil and 5-phospho-alpha-D-ribose 1-diphosphate (PRPP) to UMP and diphosphate. The polypeptide is Uracil phosphoribosyltransferase (Campylobacter jejuni subsp. jejuni serotype O:2 (strain ATCC 700819 / NCTC 11168)).